The chain runs to 118 residues: Small ribosomal subunit protein uS13 (118 aa).

The interval 94–118 is disordered; that stretch reads GLPVRGQRTKTNARTRKGPRKPIKK.

It belongs to the universal ribosomal protein uS13 family. Part of the 30S ribosomal subunit. Forms a loose heterodimer with protein S19. Forms two bridges to the 50S subunit in the 70S ribosome.

Functionally, located at the top of the head of the 30S subunit, it contacts several helices of the 16S rRNA. In the 70S ribosome it contacts the 23S rRNA (bridge B1a) and protein L5 of the 50S subunit (bridge B1b), connecting the 2 subunits; these bridges are implicated in subunit movement. Contacts the tRNAs in the A and P-sites. The protein is Small ribosomal subunit protein uS13 of Salmonella paratyphi A (strain ATCC 9150 / SARB42).